The chain runs to 351 residues: Quinolinate phosphoribosyltransferase [decarboxylating] 2, mitochondrial (351 aa).

Substrate-binding positions include Arg142, Thr173–Lys175, Arg197, Lys207, Glu240, Asp267, Ser299–Asn301, and Ser320–Ala322.

It belongs to the NadC/ModD family.

Its subcellular location is the mitochondrion. The enzyme catalyses nicotinate beta-D-ribonucleotide + CO2 + diphosphate = quinolinate + 5-phospho-alpha-D-ribose 1-diphosphate + 2 H(+). It participates in alkaloid biosynthesis; nicotine biosynthesis. Its pathway is cofactor biosynthesis; NAD(+) biosynthesis; nicotinate D-ribonucleotide from quinolinate: step 1/1. Functionally, involved in the biosynthesis of pyridine alkaloid natural products, leading mainly to the production of anabasine, anatabine, nicotine and nornicotine, effective deterrents against herbivores with antiparasitic and pesticide properties (neurotoxins); nornicotine serves as the precursor in the synthesis of the carcinogen compound N'-nitrosonornicotine (NNN). Involved in the catabolism of quinolinic acid (QA). The polypeptide is Quinolinate phosphoribosyltransferase [decarboxylating] 2, mitochondrial (Nicotiana glauca (Glaucous tobacco)).